The chain runs to 469 residues: Properdin (469 aa).

Positions 1–27 (MITEGAQAPRLLLPPLLLLLTLPATGS) are cleaved as a signal peptide. 7 consecutive TSP type-1 domains span residues 28–76 (DPVL…QPCR), 77–134 (SPRW…QCCP), 136–191 (MGGW…QSCP), 193–255 (HGAW…PPCP), 257–313 (AGSW…VPCP), 315–377 (DGEW…QHCP), and 379–462 (KGSW…PACK). 3 cysteine pairs are disulfide-bonded: Cys32-Cys56, Cys43-Cys72, and Cys57-Cys75. C-linked (Man) tryptophan glycans are attached at residues Trp83 and Trp86. Intrachain disulfides connect Cys89-Cys127, Cys93-Cys133, Cys104-Cys111, Cys132-Cys170, Cys148-Cys184, Cys152-Cys190, and Cys163-Cys174. Trp139, Trp142, and Trp145 each carry a C-linked (Man) tryptophan glycan. Residue Thr151 is glycosylated (O-linked (Fuc...) threonine). Trp196, Trp199, and Trp202 each carry a C-linked (Man) tryptophan glycan. 3 cysteine pairs are disulfide-bonded: Cys205–Cys248, Cys209–Cys254, and Cys224–Cys238. O-linked (Fuc...) serine glycosylation occurs at Ser208. Positions 218 to 238 (ETRSRKCSAPEPSQKPPGKPC) are disordered. C-linked (Man) tryptophan glycans are attached at residues Trp260 and Trp263. 3 cysteine pairs are disulfide-bonded: Cys269–Cys306, Cys273–Cys312, and Cys284–Cys296. Residue Thr272 is glycosylated (O-linked (Fuc...) threonine). C-linked (Man) tryptophan glycans are attached at residues Trp321 and Trp324. Cystine bridges form between Cys327–Cys370, Cys337–Cys376, and Cys350–Cys360. Residues 351 to 359 (KGRKFDGHR) form an interaction with Complement C3 beta chain region. C-linked (Man) tryptophan glycans are attached at residues Trp382, Trp385, and Trp388. Intrachain disulfides connect Cys391/Cys455, Cys395/Cys461, and Cys407/Cys439. Asn428 is a glycosylation site (N-linked (GlcNAc...) asparagine).

In terms of assembly, in plasma, properdin exists as dimers, trimers or tetramers in the relative proportions of 26:54:20. Interacts with the pro-C3-convertase enzyme complex (C3b-Bb) comprised of Complement C3 beta chain (C3b) and the Complement factor B Bb fragment (Bb), where it binds (via its TSP type-1 5 domain) with C3b and Bb. This interaction stabilizes the complex and allows it to become the active C3-convertase enzyme complex (C3b-Bb-FP). Interacts with C3b. Interacts with CFB.

Its subcellular location is the secreted. A positive regulator of the alternate pathway of complement. It binds to and stabilizes the C3- and C5-convertase enzyme complexes. Inhibits CFI-CFH mediated degradation of Inhibits CFI-CFH mediated degradation of Complement C3 beta chain (C3b). The polypeptide is Properdin (CFP) (Pongo abelii (Sumatran orangutan)).